Reading from the N-terminus, the 343-residue chain is Thiamine-phosphate synthase (343 aa).

A unknown region spans residues 1 to 123; it reads MQQASPTAIA…GACCKQLRYR (123 aa). Positions 124–343 are thiamine-phosphate synthase; the sequence is VYALESGLLG…LLTQLSRINP (220 aa). 4-amino-2-methyl-5-(diphosphooxymethyl)pyrimidine-binding positions include 171–175 and Asn203; that span reads QYRDK. The Mg(2+) site is built by Asp204 and Asp223. 4-amino-2-methyl-5-(diphosphooxymethyl)pyrimidine is bound at residue Ser242. 2-[(2R,5Z)-2-carboxy-4-methylthiazol-5(2H)-ylidene]ethyl phosphate is bound at residue 268–270; the sequence is TPT. A 4-amino-2-methyl-5-(diphosphooxymethyl)pyrimidine-binding site is contributed by Lys271. Gly298 serves as a coordination point for 2-[(2R,5Z)-2-carboxy-4-methylthiazol-5(2H)-ylidene]ethyl phosphate.

The protein belongs to the thiamine-phosphate synthase family. Mg(2+) is required as a cofactor.

It catalyses the reaction 2-[(2R,5Z)-2-carboxy-4-methylthiazol-5(2H)-ylidene]ethyl phosphate + 4-amino-2-methyl-5-(diphosphooxymethyl)pyrimidine + 2 H(+) = thiamine phosphate + CO2 + diphosphate. It carries out the reaction 2-(2-carboxy-4-methylthiazol-5-yl)ethyl phosphate + 4-amino-2-methyl-5-(diphosphooxymethyl)pyrimidine + 2 H(+) = thiamine phosphate + CO2 + diphosphate. The enzyme catalyses 4-methyl-5-(2-phosphooxyethyl)-thiazole + 4-amino-2-methyl-5-(diphosphooxymethyl)pyrimidine + H(+) = thiamine phosphate + diphosphate. The protein operates within cofactor biosynthesis; thiamine diphosphate biosynthesis; thiamine phosphate from 4-amino-2-methyl-5-diphosphomethylpyrimidine and 4-methyl-5-(2-phosphoethyl)-thiazole: step 1/1. Condenses 4-methyl-5-(beta-hydroxyethyl)thiazole monophosphate (THZ-P) and 2-methyl-4-amino-5-hydroxymethyl pyrimidine pyrophosphate (HMP-PP) to form thiamine monophosphate (TMP). This Synechocystis sp. (strain ATCC 27184 / PCC 6803 / Kazusa) protein is Thiamine-phosphate synthase.